We begin with the raw amino-acid sequence, 217 residues long: MAAICLPVAKHSFPSLLNTQTPKPLFSQNLHTIPLSSQSQICGLKFLISSPSSLPPPPSYSARISVFAKVSKGSVPPQFTLKDQDGKNVSLTEFKGKPVVVYFYPADETPGCTKQACAFRDSYEKFKKAGAEVIGISGDDPSSHKAFAKKYRLPYTLLSDEGNKIRREWGVPADLFGTLPGRQTYVLDKNGTVQLIYNNQFQPEKHIDETLKFLQSA.

The N-terminal 65 residues, 1–65 (MAAICLPVAK…PPPSYSARIS (65 aa)), are a transit peptide targeting the chloroplast. Positions 70–217 (VSKGSVPPQF…DETLKFLQSA (148 aa)) constitute a Thioredoxin domain. The active-site Cysteine sulfenic acid (-SOH) intermediate is C112. C112 and C117 are disulfide-bonded.

The protein belongs to the peroxiredoxin family. BCP/PrxQ subfamily. Monomer. In terms of tissue distribution, expressed in the leaves, roots and stems.

The protein resides in the plastid. Its subcellular location is the chloroplast thylakoid lumen. The catalysed reaction is a hydroperoxide + [thioredoxin]-dithiol = an alcohol + [thioredoxin]-disulfide + H2O. Its function is as follows. Thiol-specific peroxidase that catalyzes the reduction of hydrogen peroxide and organic hydroperoxides to water and alcohols, respectively. Plays a role in cell protection against oxidative stress by detoxifying peroxides. Involved in both resistance against fungal disease and oxidative stress. This Gentiana triflora (Clustered gentian) protein is Peroxiredoxin Q, chloroplastic (AFP1).